Reading from the N-terminus, the 465-residue chain is MDGHNQNQYQNQNQIQQSQQPPLKKYVTQRRSVDVSSPYINLYYNRRHGLPNLVVEPETSYTIDIMPPNAYRGRDRVINLPSKFTHLSSNKVKHVIPAIQWTPEGRRLVVATYSGEFSLWNASSFTFETLMQAHDSAVTTMKYSHDSDWMISGDADGMIKIWQPNFSMVKEIDAAHTESIRDMAFSSNDSKFVTCSDDNILKIWNFSNGKQERVLSGHHWDVKSCDWHPEMGLIASASKDNLVKLWDPRSGNCISSILKFKHTVLKTRFQPTKGNLLMAISKDKSCRVFDIRYSMKELMCVRDETDYMTLEWHPINESMFTLACYDGSLKHFDLLQNLNEPILTIPYAHDKCITSLSYNPVGHIFATAAKDRTIRFWTRARPIDPNAYDDPTYNNKKINGWFFGINNDINAVREKSEFGAAPPPPATLEPHALPNMNGFINKKPRQEIPGIDSNIKSSTLPGLSI.

A compositionally biased stretch (low complexity) spans 1–20 (MDGHNQNQYQNQNQIQQSQQ). Residues 1-26 (MDGHNQNQYQNQNQIQQSQQPPLKKY) are disordered. WD repeat units follow at residues 133–163 (AHDS…KIWQ), 175–205 (AHTE…KIWN), 217–247 (GHHW…KLWD), 259–290 (KFKH…RVFD), and 348–378 (AHDK…RFWT). The segment at 417 to 465 (EFGAAPPPPATLEPHALPNMNGFINKKPRQEIPGIDSNIKSSTLPGLSI) is disordered. Over residues 454-465 (NIKSSTLPGLSI) the composition is skewed to polar residues.

As to quaternary structure, component of the cleavage and polyadenylation factor (CPF) complex, which is composed of at least PTI1, SYC1, SSU72, GLC7, MPE1, REF2, PFS2, PTA1, YSH1/BRR5, SWD2, CFT2/YDH1, YTH1, CFT1/YHH1, FIP1 and PAP1. Interacts with YSH1/BRR5, FIP1 and RNA14.

The protein localises to the nucleus. Its function is as follows. Integral and essential component of the cleavage and polyadenylation factor (CPF) complex, which plays a key role in polyadenylation-dependent pre-mRNA 3'-end formation and cooperates with cleavage factors including the CFIA complex and NAB4/CFIB. May bridge the CPF and CFIA complexes. This chain is Polyadenylation factor subunit 2 (PFS2), found in Saccharomyces cerevisiae (strain ATCC 204508 / S288c) (Baker's yeast).